We begin with the raw amino-acid sequence, 287 residues long: Myoblast determination protein 1 homolog B (287 aa).

Positions D96–L147 constitute a bHLH domain. 2 disordered regions span residues N161–D202 and Q231–H277. The span at D168–S188 shows a compositional bias: low complexity. Residues S267 to H277 show a composition bias toward polar residues.

As to quaternary structure, efficient DNA binding requires dimerization with another bHLH protein.

The protein resides in the nucleus. Functionally, may act as a transcriptional activator that promotes transcription of muscle-specific target genes and plays a role in muscle differentiation. The protein is Myoblast determination protein 1 homolog B (myod1-b) of Xenopus laevis (African clawed frog).